The primary structure comprises 292 residues: Acetylglutamate kinase (292 aa).

Residues Gly64 to Gly65, Arg86, and Asn190 each bind substrate.

The protein belongs to the acetylglutamate kinase family. ArgB subfamily.

It localises to the cytoplasm. The enzyme catalyses N-acetyl-L-glutamate + ATP = N-acetyl-L-glutamyl 5-phosphate + ADP. The protein operates within amino-acid biosynthesis; L-arginine biosynthesis; N(2)-acetyl-L-ornithine from L-glutamate: step 2/4. In terms of biological role, catalyzes the ATP-dependent phosphorylation of N-acetyl-L-glutamate. The sequence is that of Acetylglutamate kinase from Geobacter metallireducens (strain ATCC 53774 / DSM 7210 / GS-15).